The chain runs to 358 residues: Transcription factor bHLH67 (358 aa).

Residues 125–176 (NMTLPSSTSSPLSAHSRRKRKINHLLPQEMTREKRKRRKTKPSKNNEEIENQ) are disordered. Low complexity predominate over residues 127-137 (TLPSSTSSPLS). The span at 157–166 (EKRKRRKTKP) shows a compositional bias: basic residues. Residues 175–226 (NQRINHIAVERNRRRQMNEHINSLRALLPPSYIQRGDQASIVGGAINYVKVL) form the bHLH domain.

In terms of assembly, homodimer. Expressed constitutively in roots, leaves, stems, and flowers.

The protein resides in the nucleus. In Arabidopsis thaliana (Mouse-ear cress), this protein is Transcription factor bHLH67 (BHLH67).